A 328-amino-acid polypeptide reads, in one-letter code: DNA-directed RNA polymerase subunit alpha (328 aa).

The tract at residues 1 to 244 (MEKFLKYEIK…EHLNPIVSVN (244 aa)) is alpha N-terminal domain (alpha-NTD). Residues 261 to 328 (KVKSFAKQIE…VQELGLKFRS (68 aa)) form an alpha C-terminal domain (alpha-CTD) region.

This sequence belongs to the RNA polymerase alpha chain family. In terms of assembly, homodimer. The RNAP catalytic core consists of 2 alpha, 1 beta, 1 beta' and 1 omega subunit. When a sigma factor is associated with the core the holoenzyme is formed, which can initiate transcription.

It carries out the reaction RNA(n) + a ribonucleoside 5'-triphosphate = RNA(n+1) + diphosphate. DNA-dependent RNA polymerase catalyzes the transcription of DNA into RNA using the four ribonucleoside triphosphates as substrates. In Mycoplasma genitalium (strain ATCC 33530 / DSM 19775 / NCTC 10195 / G37) (Mycoplasmoides genitalium), this protein is DNA-directed RNA polymerase subunit alpha.